The following is a 140-amino-acid chain: Nucleoside diphosphate kinase (140 aa).

ATP contacts are provided by Lys11, Phe59, Arg87, Thr93, Arg104, and Asn114. His117 functions as the Pros-phosphohistidine intermediate in the catalytic mechanism.

Belongs to the NDK family. As to quaternary structure, homotetramer. Requires Mg(2+) as cofactor.

It is found in the cytoplasm. The enzyme catalyses a 2'-deoxyribonucleoside 5'-diphosphate + ATP = a 2'-deoxyribonucleoside 5'-triphosphate + ADP. It carries out the reaction a ribonucleoside 5'-diphosphate + ATP = a ribonucleoside 5'-triphosphate + ADP. In terms of biological role, major role in the synthesis of nucleoside triphosphates other than ATP. The ATP gamma phosphate is transferred to the NDP beta phosphate via a ping-pong mechanism, using a phosphorylated active-site intermediate. This is Nucleoside diphosphate kinase from Francisella tularensis subsp. tularensis (strain SCHU S4 / Schu 4).